A 634-amino-acid polypeptide reads, in one-letter code: Chaperone protein DnaK 2 (634 aa).

A Phosphothreonine; by autocatalysis modification is found at Thr-197. Over residues 600 to 620 (ASAEASANAQAGPSSSSSSSS) the composition is skewed to low complexity. The disordered stretch occupies residues 600-634 (ASAEASANAQAGPSSSSSSSSGDDDVIDAEFSESK). Residues 621–634 (GDDDVIDAEFSESK) are compositionally biased toward acidic residues.

The protein belongs to the heat shock protein 70 family.

Functionally, acts as a chaperone. The protein is Chaperone protein DnaK 2 of Synechococcus sp. (strain ATCC 27144 / PCC 6301 / SAUG 1402/1) (Anacystis nidulans).